Consider the following 270-residue polypeptide: Hemin import ATP-binding protein HmuV (270 aa).

The ABC transporter domain maps to 2–238 (LTVENIEVTL…VTLSQAYGCT (237 aa)). 34-41 (GHNGSGKT) contributes to the ATP binding site.

This sequence belongs to the ABC transporter superfamily. Heme (hemin) importer (TC 3.A.1.14.5) family. In terms of assembly, the complex is composed of two ATP-binding proteins (HmuV), two transmembrane proteins (HmuU) and a solute-binding protein (HmuT).

It localises to the cell inner membrane. In terms of biological role, part of the ABC transporter complex HmuTUV involved in hemin import. Responsible for energy coupling to the transport system. The protein is Hemin import ATP-binding protein HmuV of Jannaschia sp. (strain CCS1).